The following is a 437-amino-acid chain: Elongation factor 1-gamma (437 aa).

Alanine 2 carries the post-translational modification N-acetylalanine. In terms of domain architecture, GST N-terminal spans 2-87 (AAGTLYTYPE…YVSNEELRGS (86 aa)). In terms of domain architecture, GST C-terminal spans 88–216 (TPEAAAQVVQ…VKLCEKMAQF (129 aa)). N6-acetyllysine is present on residues lysine 147 and lysine 212. The span at 221–254 (FAESQPKKDTPRKEKGSREEKQKPQTERKEEKKA) shows a compositional bias: basic and acidic residues. The tract at residues 221–268 (FAESQPKKDTPRKEKGSREEKQKPQTERKEEKKAAAPAPEEEMDECEQ) is disordered. Residue lysine 253 forms a Glycyl lysine isopeptide (Lys-Gly) (interchain with G-Cter in SUMO1) linkage. The EF-1-gamma C-terminal domain maps to 276-437 (AKDPFAHLPK…KAVNQGKIFK (162 aa)). Lysine 285 is covalently cross-linked (Glycyl lysine isopeptide (Lys-Gly) (interchain with G-Cter in SUMO2)). The residue at position 401 (lysine 401) is an N6-acetyllysine. Position 434 is an N6-acetyllysine; alternate (lysine 434). At lysine 434 the chain carries N6-malonyllysine; alternate.

As to quaternary structure, EF-1 is composed of four subunits: alpha, beta, delta, and gamma.

Functionally, probably plays a role in anchoring the complex to other cellular components. This chain is Elongation factor 1-gamma (Eef1g), found in Rattus norvegicus (Rat).